We begin with the raw amino-acid sequence, 336 residues long: Ketoreductase adrE (336 aa).

Tyr-171 provides a ligand contact to NADP(+).

This sequence belongs to the NAD(P)-dependent epimerase/dehydratase family. Dihydroflavonol-4-reductase subfamily.

It participates in secondary metabolite biosynthesis; terpenoid biosynthesis. Functionally, ketoreductase; part of the gene cluster that mediates the biosynthesis of andrastins, meroterpenoid compounds that exhibit inhibitory activity against ras farnesyltransferase, suggesting that they could be promising leads for antitumor agents. The first step of the pathway is the synthesis of 3,5-dimethylorsellinic acid (DMOA) by the polyketide synthase adrD via condensation of one acetyl-CoA starter unit with 3 malonyl-CoA units and 2 methylations. DMAO is then converted to farnesyl-DMAO by the prenyltransferase adrG. The methyltransferase adrK catalyzes the methylation of the carboxyl group of farnesyl-DMAO to farnesyl-DMAO methyl ester which is further converted to epoxyfarnesyl-DMAO methyl ester by the FAD-dependent monooxygenase adrH. The terpene cyclase adrI then catalyzes the carbon skeletal rearrangement to generate the andrastin E, the first compound in the pathway having the andrastin scaffold, with the tetracyclic ring system. The post-cyclization tailoring enzymes adrF, adrE, adrJ, and adrA, are involved in the conversion of andrastin E into andrastin A. The short chain dehydrogenase adrF is responsible for the oxidation of the C-3 a hydroxyl group of andrastin E to yield the corresponding ketone, andrastin D. The ketoreductase adrE stereoselectively reduces the carbonyl moiety to reverse the stereochemistry of the C-3 position to yield andrastin F. The acetyltransferase adrJ is the acetyltransferase that attaches the acetyl group to the C-3 hydroxyl group of andrastin F to yield andrastin C. Finally, the cytochrome P450 monooxygenase adrA catalyzes two sequential oxidation reactions of the C-23 methyl group, to generate the corresponding alcohol andrastin B, and aldehyde andrastin A. The polypeptide is Ketoreductase adrE (Penicillium roqueforti).